The sequence spans 307 residues: Elongation factor Ts (307 aa).

The segment at 80-83 (TDFV) is involved in Mg(2+) ion dislocation from EF-Tu.

This sequence belongs to the EF-Ts family.

The protein resides in the cytoplasm. Associates with the EF-Tu.GDP complex and induces the exchange of GDP to GTP. It remains bound to the aminoacyl-tRNA.EF-Tu.GTP complex up to the GTP hydrolysis stage on the ribosome. The protein is Elongation factor Ts of Rhodospirillum centenum (strain ATCC 51521 / SW).